We begin with the raw amino-acid sequence, 86 residues long: Small ribosomal subunit protein uS15 (86 aa).

This sequence belongs to the universal ribosomal protein uS15 family. Part of the 30S ribosomal subunit. Forms a bridge to the 50S subunit in the 70S ribosome, contacting the 23S rRNA.

Its function is as follows. One of the primary rRNA binding proteins, it binds directly to 16S rRNA where it helps nucleate assembly of the platform of the 30S subunit by binding and bridging several RNA helices of the 16S rRNA. Forms an intersubunit bridge (bridge B4) with the 23S rRNA of the 50S subunit in the ribosome. The polypeptide is Small ribosomal subunit protein uS15 (Endomicrobium trichonymphae).